Reading from the N-terminus, the 326-residue chain is Phenylalanine--tRNA ligase alpha subunit (326 aa).

E251 serves as a coordination point for Mg(2+).

It belongs to the class-II aminoacyl-tRNA synthetase family. Phe-tRNA synthetase alpha subunit type 1 subfamily. In terms of assembly, tetramer of two alpha and two beta subunits. Requires Mg(2+) as cofactor.

The protein resides in the cytoplasm. It catalyses the reaction tRNA(Phe) + L-phenylalanine + ATP = L-phenylalanyl-tRNA(Phe) + AMP + diphosphate + H(+). This is Phenylalanine--tRNA ligase alpha subunit from Idiomarina loihiensis (strain ATCC BAA-735 / DSM 15497 / L2-TR).